The following is a 164-amino-acid chain: MYRIRVFGDPVLRKRAKPVTKFDENLKKTIERMIETMYHYDGVGLAAPQVGISQRFFVMDVGNGPVAVINPEILEIDPETEVAEEGCLSFPEIFVEIERSKRIKVKYQNTRGEYVEEELEGYAARVFQHEFDHLNGVLIIDRISPAKRLLLRKKLMDIARTVKR.

Fe cation is bound by residues C87 and H129. E130 is a catalytic residue. Residue H133 participates in Fe cation binding.

The protein belongs to the polypeptide deformylase family. Requires Fe(2+) as cofactor.

It catalyses the reaction N-terminal N-formyl-L-methionyl-[peptide] + H2O = N-terminal L-methionyl-[peptide] + formate. Removes the formyl group from the N-terminal Met of newly synthesized proteins. Requires at least a dipeptide for an efficient rate of reaction. N-terminal L-methionine is a prerequisite for activity but the enzyme has broad specificity at other positions. In Thermotoga maritima (strain ATCC 43589 / DSM 3109 / JCM 10099 / NBRC 100826 / MSB8), this protein is Peptide deformylase.